Reading from the N-terminus, the 749-residue chain is Myosin-binding protein 2 (749 aa).

Residues 17–37 (ITLILVYAFLEWSLIFFILLN) form a helical membrane-spanning segment. The disordered stretch occupies residues 164-184 (NLNDSQEETEEKKVPQSHEKL). Positions 173–184 (EEKKVPQSHEKL) are enriched in basic and acidic residues. Positions 411 to 509 (LTVDKLKFEL…ELEKELEVYR (99 aa)) constitute a GTD-binding domain. A coiled-coil region spans residues 589–621 (ERLSILGRLKFLEEKLTDLNNEEDDEEEAKTFE). Residues 608–640 (NNEEDDEEEAKTFESNGSINGNEHIHGKETNGK) are disordered. Residues 630–639 (EHIHGKETNG) show a composition bias toward basic and acidic residues. Positions 676 to 710 (DSEKGENVTIEEEVDELYERLEALEADREFLRHCV) form a coiled coil.

In terms of assembly, interacts with myosin XI-K and XI-1. Expressed in leaf epidermal cells, roots and root hairs.

The protein resides in the endomembrane system. In terms of biological role, membrane-anchored myosin receptors that define a distinct, plant-specific transport vesicle compartment. The sequence is that of Myosin-binding protein 2 from Arabidopsis thaliana (Mouse-ear cress).